We begin with the raw amino-acid sequence, 306 residues long: D-alanine--D-alanine ligase (306 aa).

One can recognise an ATP-grasp domain in the interval 101–303; the sequence is KLVWQALGLP…FSQLVARILM (203 aa). An ATP-binding site is contributed by 134-189; the sequence is VAKLGLPLIVKPSHEGSSVGMSKVDHASELQKALVEAFQHDSDVLIEKWLSGPEFT. Mg(2+) is bound by residues D257, E270, and N272.

This sequence belongs to the D-alanine--D-alanine ligase family. Requires Mg(2+) as cofactor. The cofactor is Mn(2+).

Its subcellular location is the cytoplasm. It catalyses the reaction 2 D-alanine + ATP = D-alanyl-D-alanine + ADP + phosphate + H(+). The protein operates within cell wall biogenesis; peptidoglycan biosynthesis. Functionally, cell wall formation. The protein is D-alanine--D-alanine ligase of Yersinia pseudotuberculosis serotype O:1b (strain IP 31758).